The following is a 201-amino-acid chain: Twin horsetail protein 2 (201 aa).

The protein localises to the nucleus. Functionally, required for correct meiotic chromosome segregation and recombination. In Schizosaccharomyces pombe (strain 972 / ATCC 24843) (Fission yeast), this protein is Twin horsetail protein 2 (tht2).